A 334-amino-acid chain; its full sequence is Cyclin N-terminal domain-containing protein 1 (334 aa).

Positions 29-180 constitute a Cyclin N-terminal domain; it reads NALLHLAQQN…ILKSLNFQIN (152 aa).

In terms of assembly, interacts with PRR19; this interaction promotes crossover formation. Interacts with RFC3 and RFC4; these interactions facilitate crossover formation. Interacts with CDC34; this interaction regulates the cell-cycle progression. As to expression, isoform 2 is expressed in spermatocyte.

The protein localises to the nucleus. It is found in the cytoplasm. It localises to the chromosome. In terms of biological role, plays a role in the different steps of crossover formation during meiotic recombination. Participates in the crossover differentiation step of crossover-specific recombination intermediates through its interaction with PRR19. In addition, stimulates crossover formation through the interactions with RFC3 and RFC4 and simultaneously regulates cell-cycle progression through interactions with CDC34 and subsequent ubiquitination of WEE1. May also participates in an active deselection process that destabilizes or removes excess pre-CO intermediates. This is Cyclin N-terminal domain-containing protein 1 from Mus musculus (Mouse).